The following is a 359-amino-acid chain: Outer membrane protein P5 (359 aa).

An N-terminal signal peptide occupies residues 1–21; sequence MKKTAIALVVAGLAAASVAQA. The next 8 membrane-spanning stretches (beta stranded) occupy residues 27 to 37, 64 to 75, 83 to 91, 110 to 121, 126 to 134, 164 to 173, 178 to 185, and 211 to 219; these read TFYAGVKAGQG, TFTYGVFGGYQI, LAAELGYDD, HGAYLSLKGSYE, LDVYGKAGV, GLFAVGAEYA, LAVRLEYQ, and CINAGISYR. In terms of domain architecture, OmpA-like spans 233–359; it reads MVSKTFSLNS…RVEIAVNGTK (127 aa). Cys332 and Cys344 are disulfide-bonded.

This sequence belongs to the outer membrane OOP (TC 1.B.6) superfamily. OmpA family. Monomer and homodimer.

The protein resides in the cell outer membrane. The protein localises to the fimbrium. In terms of biological role, acts as a fimbriae subunit, allowing adhesion to host cells. Its function is as follows. With TolR probably plays a role in maintaining the position of the peptidoglycan cell wall in the periplasm. Acts as a porin with low permeability that allows slow penetration of small solutes; an internal gate slows down solute passage. The sequence is that of Outer membrane protein P5 from Haemophilus influenzae.